The following is a 404-amino-acid chain: Cysteine desulfurase IscS (404 aa).

Residues Ala-75–Thr-76, Asn-155, Gln-183, and Thr-203–His-205 each bind pyridoxal 5'-phosphate. An N6-(pyridoxal phosphate)lysine modification is found at Lys-206. Thr-243 lines the pyridoxal 5'-phosphate pocket. The active-site Cysteine persulfide intermediate is Cys-328. Residue Cys-328 participates in [2Fe-2S] cluster binding.

Belongs to the class-V pyridoxal-phosphate-dependent aminotransferase family. NifS/IscS subfamily. As to quaternary structure, homodimer. Forms a heterotetramer with IscU, interacts with other sulfur acceptors. It depends on pyridoxal 5'-phosphate as a cofactor.

Its subcellular location is the cytoplasm. The catalysed reaction is (sulfur carrier)-H + L-cysteine = (sulfur carrier)-SH + L-alanine. It participates in cofactor biosynthesis; iron-sulfur cluster biosynthesis. Master enzyme that delivers sulfur to a number of partners involved in Fe-S cluster assembly, tRNA modification or cofactor biosynthesis. Catalyzes the removal of elemental sulfur atoms from cysteine to produce alanine. Functions as a sulfur delivery protein for Fe-S cluster synthesis onto IscU, an Fe-S scaffold assembly protein, as well as other S acceptor proteins. This chain is Cysteine desulfurase IscS, found in Cronobacter sakazakii (strain ATCC BAA-894) (Enterobacter sakazakii).